The chain runs to 157 residues: Glutamyl-tRNA(Gln) amidotransferase subunit C, mitochondrial (157 aa).

It belongs to the GatC family. In terms of assembly, subunit of the heterotrimeric GatCAB amidotransferase (AdT) complex, composed of A, B and C subunits.

The protein localises to the mitochondrion. The enzyme catalyses L-glutamyl-tRNA(Gln) + L-glutamine + ATP + H2O = L-glutaminyl-tRNA(Gln) + L-glutamate + ADP + phosphate + H(+). Functionally, allows the formation of correctly charged Gln-tRNA(Gln) through the transamidation of misacylated Glu-tRNA(Gln) in the mitochondria. The reaction takes place in the presence of glutamine and ATP through an activated gamma-phospho-Glu-tRNA(Gln). This Drosophila virilis (Fruit fly) protein is Glutamyl-tRNA(Gln) amidotransferase subunit C, mitochondrial.